The sequence spans 309 residues: MSEDRDLLAVGHTAFDYIIHLDEFPEPNTSTAIKRMRNLHGGAAANVALVGSRLGLRTSLVSAVGGDFEGSEYRELLESSGIDIESMILVADESTPTAFVMTDSDHNQISYFYWGAARYFKDAETPADAIKSARAVHLATGDPSFNCRCGEFARSLGKIISFDPGQDLHMYSRSQLERAVGVCDILFGNHHEIDRICSKLSVDIHGLREMGPGVVVKTYGKEGSIIYSDDVIKIDAIPREAVDPTGAGDSYRAGFMRAYLRGADLKTCGRFASAVASFIVEDEGTQTNIPDTGEAVKRFTAQWGYEPPI.

Residues Asp-16, Gly-42, and Asn-46 each contribute to the substrate site. ATP is bound at residue Gln-108. Substrate-binding positions include 110–112 and Gln-166; that span reads SYF. Residues Asn-189 and 217-223 contribute to the ATP site; that span reads KTYGKEG. Asp-249 is a substrate binding site. Asp-249 (proton acceptor) is an active-site residue.

It belongs to the carbohydrate kinase PfkB family. In terms of assembly, homodimer. Mg(2+) is required as a cofactor.

In terms of biological role, catalyzes the phosphorylation of a wide range of nucleosides to yield nucleoside monophosphates, using ATP, ITP or GTP as phosphate donor. The sequence is that of Nucleoside kinase from Methanothermobacter thermautotrophicus (strain ATCC 29096 / DSM 1053 / JCM 10044 / NBRC 100330 / Delta H) (Methanobacterium thermoautotrophicum).